Consider the following 334-residue polypeptide: O-methyltransferase SfmM3 (334 aa).

S-adenosyl-L-methionine-binding positions include Asp190 and Gly216 to Phe218. His236 acts as the Proton acceptor in catalysis.

It belongs to the class I-like SAM-binding methyltransferase superfamily. Cation-independent O-methyltransferase family. COMT subfamily.

It carries out the reaction 5-hydroxy-3-methyl-L-tyrosine + S-adenosyl-L-methionine = 5-hydroxy-3-methyl-O-methyl-L-tyrosine + S-adenosyl-L-homocysteine + H(+). It participates in antibiotic biosynthesis. Functionally, O-methyltransferase that mediates the methylation of 3-hydroxy-5-methyl-L-tyrosine (3-OH-5-Me-Tyr) into 3-hydroxy-5-methyl-O-methyltyrosine (3-OH-5-Me-OMe-Tyr), a core structure of saframycin A, a potent antitumor antibiotic that belongs to the tetrahydroisoquinoline family. The chain is O-methyltransferase SfmM3 from Streptomyces lavendulae.